Reading from the N-terminus, the 275-residue chain is Elongation factor Ts (275 aa).

The tract at residues 76 to 79 (TDFV) is involved in Mg(2+) ion dislocation from EF-Tu.

It belongs to the EF-Ts family.

It is found in the cytoplasm. In terms of biological role, associates with the EF-Tu.GDP complex and induces the exchange of GDP to GTP. It remains bound to the aminoacyl-tRNA.EF-Tu.GTP complex up to the GTP hydrolysis stage on the ribosome. This is Elongation factor Ts from Mycolicibacterium paratuberculosis (strain ATCC BAA-968 / K-10) (Mycobacterium paratuberculosis).